The chain runs to 221 residues: NEDD4 family-interacting protein 1 (221 aa).

A2 carries the post-translational modification N-acetylalanine. An interaction with UBE2L3 region spans residues 2-41 (ALALAALAAVEPACGSGYQQLQNEEEPGEPEQTAGDAPPP). The Cytoplasmic portion of the chain corresponds to 2–116 (ALALAALAAV…TDQLRIGNDG (115 aa)). Positions 18 to 44 (GYQQLQNEEEPGEPEQTAGDAPPPYSS) are disordered. 3 consecutive short sequence motifs (PPxY motif) follow at residues 39-42 (PPPY), 64-67 (PPSY), and 74-76 (PSY). Positions 42-76 (YSSITAESAAYFDYKDESGFPKPPSYNVATTLPSY) are interaction with ITCH. Residues 117 to 137 (IFMLTFFMAFLFNWIGFFLSF) traverse the membrane as a helical segment. Topologically, residues 138-143 (CLTTSA) are extracellular. The chain crosses the membrane as a helical span at residues 144–164 (AGRYGAISGFGLSLIKWILIV). The Cytoplasmic segment spans residues 165–172 (RFSTYFPG). Residues 173–193 (YFDGQYWLWWVFLVLGFLLFL) form a helical membrane-spanning segment. Over 194-221 (RGFINYAKVRKMPETFSNLPRTRVLFIY) the chain is Extracellular.

As to quaternary structure, forms heterodimers with NDFIP2. Interacts with several E3 ubiquitin-protein ligases, including ITCH, NEDD4, NEDD4L and WWP2. The interaction with NEDD4, NEDD4L and ITCH leads to relocalization of these proteins to exosomes and eventually to exosomal secretion. Interacts with U2SURP. Interacts with SLC11A2/DMT1. Interacts with PTEN. May interact with phosphorylated EGFR. Interacts with BRAT1. Interacts with KCNH2. Interacts with MAVS. Part of a complex containing ITCH, NDFIP1 and MAP3K7. Interacts (via N-terminus) with UBE2L3; the interaction mediates recruitment of UBE2L3 to ITCH. In terms of processing, ubiquitinated by NEDD4; mono-, di- and polyubiquitinated forms are detected. Ubiquitination regulates its degradation. Undergoes transient tyrosine phosphorylation following EGF stimulation, most probably by catalyzed by SRC. Phosphorylation SRC is enhanced in the presence of NDFIP2 which may act as a scaffold to recruit SRC to NDFIP1. In terms of tissue distribution, highly expressed in embryonic and early postnatal cortex (at protein level). Widely expressed. Hardly detectable in resting T-cells; up-regulated in T-cells in response to activation.

It localises to the endosome membrane. It is found in the golgi apparatus membrane. The protein localises to the synapse. The protein resides in the synaptosome. Its subcellular location is the cell projection. It localises to the dendrite. It is found in the secreted. Its function is as follows. Activates HECT domain-containing E3 ubiquitin-protein ligases, including NEDD4 and ITCH, and consequently modulates the stability of their targets. As a result, controls many cellular processes. Prevents chronic T-helper cell-mediated inflammation by activating ITCH and thus controlling JUNB degradation. Promotes pancreatic beta cell death through degradation of JUNB and inhibition of the unfolded protein response, leading to reduction of insulin secretion. Restricts the production of pro-inflammatory cytokines in effector Th17 T-cells by promoting ITCH-mediated ubiquitination and degradation of RORC. Together with NDFIP2, limits the cytokine signaling and expansion of effector Th2 T-cells by promoting degradation of JAK1, probably by ITCH- and NEDD4L-mediated ubiquitination. Regulates peripheral T-cell tolerance to self and foreign antigens, forcing the exit of naive CD4+ T-cells from the cell cycle before they become effector T-cells. Negatively regulates RLR-mediated antiviral response by promoting SMURF1-mediated ubiquitination and subsequent degradation of MAVS. Negatively regulates KCNH2 potassium channel activity by decreasing its cell-surface expression and interfering with channel maturation through recruitment of NEDD4L to the Golgi apparatus where it mediates KCNH2 degradation. In cortical neurons, mediates the ubiquitination of the divalent metal transporter SLC11A2/DMT1 by NEDD4L, leading to its down-regulation and protection of the cells from cobalt and iron toxicity. Important for normal development of dendrites and dendritic spines in cortex. Enhances the ubiquitination of BRAT1 mediated by: NEDD4, NEDD4L and ITCH and is required for the nuclear localization of ubiquitinated BRAT1. Enhances the ITCH-mediated ubiquitination of MAP3K7 by recruiting E2 ubiquitin-conjugating enzyme UBE2L3 to ITCH. Modulates EGFR signaling through multiple pathways. In particular, may regulate the ratio of AKT1-to-MAPK8 signaling in response to EGF, acting on AKT1 probably through PTEN destabilization and on MAPK8 through ITCH-dependent MAP2K4 inactivation. As a result, may control cell growth rate. Inhibits cell proliferation by promoting PTEN nuclear localization and changing its signaling specificity. This chain is NEDD4 family-interacting protein 1 (Ndfip1), found in Mus musculus (Mouse).